A 377-amino-acid polypeptide reads, in one-letter code: uncharacterized protein (377 aa).

7 helical membrane passes run Trp21 to Phe41, Leu66 to Gly86, Ile163 to Leu183, Ala197 to Ile217, Phe236 to Phe256, Val292 to Leu312, and Ile339 to Phe359.

Its subcellular location is the cell membrane. This is an uncharacterized protein from Mycoplasma pneumoniae (strain ATCC 29342 / M129 / Subtype 1) (Mycoplasmoides pneumoniae).